The chain runs to 729 residues: Translation initiation factor IF-2 (729 aa).

The segment at Q20 to P141 is disordered. The span at A22–G91 shows a compositional bias: gly residues. The span at G92–R108 shows a compositional bias: basic and acidic residues. Low complexity predominate over residues S112 to G127. Positions P229–E396 constitute a tr-type G domain. A G1 region spans residues G238–T245. G238 to T245 contributes to the GTP binding site. Positions G263 to H267 are G2. Positions D284–G287 are G3. GTP is bound by residues D284 to H288 and N338 to D341. The segment at N338–D341 is G4. The G5 stretch occupies residues S374–K376.

It belongs to the TRAFAC class translation factor GTPase superfamily. Classic translation factor GTPase family. IF-2 subfamily.

It is found in the cytoplasm. Its function is as follows. One of the essential components for the initiation of protein synthesis. Protects formylmethionyl-tRNA from spontaneous hydrolysis and promotes its binding to the 30S ribosomal subunits. Also involved in the hydrolysis of GTP during the formation of the 70S ribosomal complex. The polypeptide is Translation initiation factor IF-2 (Roseiflexus sp. (strain RS-1)).